The primary structure comprises 2285 residues: AT-rich interactive domain-containing protein 1A (2285 aa).

Low complexity predominate over residues 1–14; that stretch reads MAAQVAPAAASSLG. 2 disordered regions span residues 1 to 820 and 978 to 1005; these read MAAQ…ALPN and ATKM…TTTN. The residue at position 2 (Ala-2) is an N-acetylalanine. Residues 23-35 are compositionally biased toward basic and acidic residues; sequence ELKKAEQQQREEA. Ser-58 and Ser-79 each carry phosphoserine. Gly residues-rich tracts occupy residues 79 to 95 and 121 to 130; these read SNGG…GGPG and PGGGGGGSSD. 3 stretches are compositionally biased toward low complexity: residues 131 to 142, 212 to 221, and 228 to 265; these read GVGAPPHSAAAA, YNSYYPNRSA, and AYAL…SSSS. Position 233 is a phosphoserine (Ser-233). A compositionally biased stretch (gly residues) spans 273 to 286; the sequence is AMGGGGPSAAGGGT. Residue Thr-286 is modified to Phosphothreonine. The short motif at 295-299 is the LXXLL element; the sequence is LNQLL. The segment covering 295–306 has biased composition (polar residues); sequence LNQLLTSPSSAR. Position 301 is a phosphoserine (Ser-301). Positions 310-327 are enriched in gly residues; that stretch reads GYPGGDYSGGPQDGGAGK. Residues 338 to 353 are compositionally biased toward low complexity; sequence GAAAAAAAAAAASGGA. A phosphoserine mark is found at Ser-363 and Ser-382. Over residues 400–425 the composition is skewed to low complexity; that stretch reads PYSQQQGPPSGPQQGHGYPGQPYGSQ. Arg-429 is subject to Asymmetric dimethylarginine. Composition is skewed to low complexity over residues 447–457, 465–546, and 553–595; these read YTQQIPPYGQQ, QGQT…QHPQ, and QPQA…YSQQ. Ser-604 bears the Phosphoserine mark. Positions 610 to 621 are enriched in low complexity; sequence SQASSAPSMTSS. Residues 628 to 637 are compositionally biased toward polar residues; that stretch reads MNLSLQSRPS. Residues 658–674 show a composition bias toward low complexity; the sequence is SPGVSTSGISSSQGEQS. Residues 675 to 685 are compositionally biased toward polar residues; the sequence is NPAQSPFSPHT. 6 positions are modified to phosphoserine: Ser-696, Ser-698, Ser-702, Ser-730, Ser-764, and Ser-772. 2 stretches are compositionally biased toward polar residues: residues 730 to 747 and 755 to 793; these read SGQS…SSIA and RNPQ…QNSM. Positions 797–807 are enriched in gly residues; that stretch reads GPQGGQYGPQG. The span at 808 to 820 shows a compositional bias: low complexity; that stretch reads GYPRQPNYNALPN. The region spanning 1017–1108 is the ARID domain; the sequence is EPERKMWVDR…CLYAFECKIE (92 aa). Disordered stretches follow at residues 1113 to 1483 and 1539 to 1603; these read PPPD…MMGG and ANHE…SPSK. Residues 1141 to 1154 show a composition bias toward low complexity; that stretch reads MQGPQTPQSTSSSM. The segment covering 1162-1177 has biased composition (pro residues); the sequence is PPTPASTPHSQIPPLP. Phosphoserine is present on Ser-1184. Residues 1194 to 1219 show a composition bias toward polar residues; that stretch reads GSDSTFQKRNSMTPNPGYQPSMNTSD. Ser-1235 bears the Phosphoserine mark. Position 1276 is an omega-N-methylarginine (Arg-1276). Polar residues-rich tracts occupy residues 1299-1315 and 1339-1356; these read NMST…SNPD and YGNQ…PFPS. The segment covering 1357–1367 has biased composition (low complexity); the sequence is QQTTMYQQQQQ. A Nuclear localization signal motif is present at residues 1368 to 1387; sequence NYKRPMDGTYGPPAKRHEGE. Positions 1396–1425 are enriched in low complexity; it reads GQGQPQQQQLPPAQPQPASQQQAAQPSPQQ. The segment covering 1468 to 1477 has biased composition (polar residues); sequence PGTNAQQNMP. The span at 1554 to 1577 shows a compositional bias: pro residues; the sequence is PYGPSAPVPPMTRPPPSNYQPPPS. Position 1604 is a phosphoserine (Ser-1604). Lys-1612 bears the N6-acetyllysine mark. Positions 1709-1713 match the LXXLL motif; the sequence is LPGLL. Disordered regions lie at residues 1747-1774 and 1859-1907; these read PGRF…PKLE and FESK…EKRI. 2 positions are modified to phosphoserine: Ser-1751 and Ser-1754. Residues 1761 to 1774 show a composition bias toward acidic residues; that stretch reads GGEEEEELLGPKLE. The span at 1886-1895 shows a compositional bias: low complexity; it reads EGTPGTTDQE. Thr-1888 carries the post-translational modification Phosphothreonine. An N6-acetyllysine modification is found at Lys-1905. Ser-1929 and Ser-1944 each carry phosphoserine. Short sequence motifs (LXXLL) lie at residues 1967–1971 and 2085–2089; these read LCTLL and LDGLL.

In terms of assembly, component of SWI/SNF chromatin remodeling complexes, in some of which it can be mutually exclusive with ARID1B/BAF250B. The canonical complex contains a catalytic subunit (either SMARCA4/BRG1/BAF190A or SMARCA2/BRM/BAF190B) and at least SMARCE1, ACTL6A/BAF53, SMARCC1/BAF155, SMARCC2/BAF170, and SMARCB1/SNF5/BAF47. Other subunits specific to each of the complexes may also be present permitting several possible combinations developmentally and tissue specific. Component of the BAF (SWI/SNF-A) complex, which includes at least actin (ACTB), ARID1A/BAF250A, ARID1B/BAF250B, SMARCA2/BRM, SMARCA4/BRG1/BAF190A, ACTL6A/BAF53, ACTL6B/BAF53B, SMARCE1/BAF57, SMARCC1/BAF155, SMARCC2/BAF170, SMARCB1/SNF5/INI1, and one or more SMARCD1/BAF60A, SMARCD2/BAF60B, or SMARCD3/BAF60C. In muscle cells, the BAF complex also contains DPF3. Component of neural progenitors-specific chromatin remodeling complex (npBAF complex) composed of at least, ARID1A/BAF250A or ARID1B/BAF250B, SMARCD1/BAF60A, SMARCD3/BAF60C, SMARCA2/BRM/BAF190B, SMARCA4/BRG1/BAF190A, SMARCB1/BAF47, SMARCC1/BAF155, SMARCE1/BAF57, SMARCC2/BAF170, PHF10/BAF45A, ACTL6A/BAF53A and actin. Component of neuron-specific chromatin remodeling complex (nBAF complex) composed of at least, ARID1A/BAF250A or ARID1B/BAF250B, SMARCD1/BAF60A, SMARCD3/BAF60C, SMARCA2/BRM/BAF190B, SMARCA4/BRG1/BAF190A, SMARCB1/BAF47, SMARCC1/BAF155, SMARCE1/BAF57, SMARCC2/BAF170, DPF1/BAF45B, DPF3/BAF45C, ACTL6B/BAF53B and actin. Component of a SWI/SNF-like EBAFa complex, at least composed of SMARCA4/BRG1/BAF190A, SMARCB1/BAF47/SNF5, ACTL6A/BAF53A, SMARCE1/BAF57, SMARCD1/BAF60A, SMARCC1/BAF155, SMARCC2/BAF170, BAF250A and MLLT1/ENL. Interacts through its C-terminus with SMARCA2/BRM/BAF190B and SMARCA4/BRG1/BAF190A. Interacts with SMARCC1/BAF155. Interacts with FOS, FOSB isoform 1 and 2, FOSL1 and FOSL2. In terms of tissue distribution, highly expressed in spleen, thymus, prostate, testis, ovary, small intestine, colon, and PBL, and at a much lower level in heart, brain, placenta, lung, liver, skeletal muscle, kidney, and pancreas.

Its subcellular location is the nucleus. Involved in transcriptional activation and repression of select genes by chromatin remodeling (alteration of DNA-nucleosome topology). Component of SWI/SNF chromatin remodeling complexes that carry out key enzymatic activities, changing chromatin structure by altering DNA-histone contacts within a nucleosome in an ATP-dependent manner. Binds DNA non-specifically. Belongs to the neural progenitors-specific chromatin remodeling complex (npBAF complex) and the neuron-specific chromatin remodeling complex (nBAF complex). During neural development a switch from a stem/progenitor to a postmitotic chromatin remodeling mechanism occurs as neurons exit the cell cycle and become committed to their adult state. The transition from proliferating neural stem/progenitor cells to postmitotic neurons requires a switch in subunit composition of the npBAF and nBAF complexes. As neural progenitors exit mitosis and differentiate into neurons, npBAF complexes which contain ACTL6A/BAF53A and PHF10/BAF45A, are exchanged for homologous alternative ACTL6B/BAF53B and DPF1/BAF45B or DPF3/BAF45C subunits in neuron-specific complexes (nBAF). The npBAF complex is essential for the self-renewal/proliferative capacity of the multipotent neural stem cells. The nBAF complex along with CREST plays a role regulating the activity of genes essential for dendrite growth. The chain is AT-rich interactive domain-containing protein 1A (ARID1A) from Homo sapiens (Human).